The following is a 38-amino-acid chain: Large ribosomal subunit protein bL36 (38 aa).

This sequence belongs to the bacterial ribosomal protein bL36 family.

The polypeptide is Large ribosomal subunit protein bL36 (Buchnera aphidicola subsp. Cinara cedri (strain Cc)).